Consider the following 360-residue polypeptide: Hydroxycarboxylic acid receptor 2 (360 aa).

At 1–30 (MSKQNHFLVINGKNCCVFRDENIAKVLPPV) the chain is on the extracellular side. A helical membrane pass occupies residues 31 to 51 (LGLEFVFGLLGNGLALWIFCF). Over 52–60 (HLKSWKSSR) the chain is Cytoplasmic. A helical transmembrane segment spans residues 61-81 (IFLFNLAVADFLLIICLPFLT). Topologically, residues 82-98 (DNYVQNWDWRFGSIPCR) are extracellular. Residues Cys97 and Cys174 are joined by a disulfide bond. The helical transmembrane segment at 99–119 (VMLFMLAMNRQGSIIFLTVVA) threads the bilayer. Topologically, residues 120–140 (VDRYFRVVHPHHFLNKISNRT) are cytoplasmic. The helical transmembrane segment at 141 to 161 (AAIISCFLWGITIGLTVHLLY) threads the bilayer. Topologically, residues 162 to 189 (TDMMTRNGDANLCSSFSICYTFRWHDAM) are extracellular. The helical transmembrane segment at 190–210 (FLLEFFLPLGIILFCSGRIIW) threads the bilayer. Residues 211 to 226 (SLRQRQMDRHVKIKRA) lie on the Cytoplasmic side of the membrane. A helical transmembrane segment spans residues 227-247 (INFIMVVAIVFVICFLPSVAV). Residues 248–270 (RIRIFWLLYKHNVRNCDIYSSVD) lie on the Extracellular side of the membrane. A helical membrane pass occupies residues 271–291 (LAFFTTLSFTYMNSMLDPVVY). Topologically, residues 292–360 (YFSSPSFPNF…SPPYLASTSR (69 aa)) are cytoplasmic. Residues 320-360 (NNRSTSVELTGDPSTIRSIPGALMTDPSEPGSPPYLASTSR) are disordered. The span at 321–336 (NRSTSVELTGDPSTIR) shows a compositional bias: polar residues. A Phosphoserine modification is found at Ser325.

This sequence belongs to the G-protein coupled receptor 1 family. Expressed in adipose tissue, lung and spleen.

It localises to the cell membrane. Functionally, acts as a high affinity receptor for both nicotinic acid (also known as niacin) and (D)-beta-hydroxybutyrate and mediates increased adiponectin secretion and decreased lipolysis through G(i)-protein-mediated inhibition of adenylyl cyclase. This pharmacological effect requires nicotinic acid doses that are much higher than those provided by a normal diet. Mediates nicotinic acid-induced apoptosis in mature neutrophils. Receptor activation by nicotinic acid results in reduced cAMP levels which may affect activity of cAMP-dependent protein kinase A and phosphorylation of target proteins, leading to neutrophil apoptosis. The rank order of potency for the displacement of nicotinic acid binding is 5-methyl pyrazole-3-carboxylic acid = pyridine-3-acetic acid &gt; acifran &gt; 5-methyl nicotinic acid = acipimox &gt;&gt; nicotinuric acid = nicotinamide. The sequence is that of Hydroxycarboxylic acid receptor 2 (Hcar2) from Rattus norvegicus (Rat).